A 239-amino-acid polypeptide reads, in one-letter code: Serine protease SplD (239 aa).

The N-terminal stretch at 1 to 36 (MNKNIIIKSIAALTILTSITGVGTTVVDGIQQTAKA) is a signal peptide. Catalysis depends on charge relay system residues histidine 75, aspartate 114, and serine 192.

This sequence belongs to the peptidase S1B family.

The protein localises to the secreted. The sequence is that of Serine protease SplD (splD) from Staphylococcus aureus (strain Mu3 / ATCC 700698).